The following is a 337-amino-acid chain: Probable dual-specificity RNA methyltransferase RlmN (337 aa).

The active-site Proton acceptor is Glu88. Residues 94 to 324 (SEKRLTVCVS…VRYSRGLATD (231 aa)) enclose the Radical SAM core domain. Cys101 and Cys327 are oxidised to a cystine. 3 residues coordinate [4Fe-4S] cluster: Cys108, Cys112, and Cys115. Residues 155-156 (GE), Ser185, 208-210 (SLH), and Asn284 contribute to the S-adenosyl-L-methionine site. Catalysis depends on Cys327, which acts as the S-methylcysteine intermediate.

Belongs to the radical SAM superfamily. RlmN family. [4Fe-4S] cluster is required as a cofactor.

The protein localises to the cytoplasm. It catalyses the reaction adenosine(2503) in 23S rRNA + 2 reduced [2Fe-2S]-[ferredoxin] + 2 S-adenosyl-L-methionine = 2-methyladenosine(2503) in 23S rRNA + 5'-deoxyadenosine + L-methionine + 2 oxidized [2Fe-2S]-[ferredoxin] + S-adenosyl-L-homocysteine. The enzyme catalyses adenosine(37) in tRNA + 2 reduced [2Fe-2S]-[ferredoxin] + 2 S-adenosyl-L-methionine = 2-methyladenosine(37) in tRNA + 5'-deoxyadenosine + L-methionine + 2 oxidized [2Fe-2S]-[ferredoxin] + S-adenosyl-L-homocysteine. In terms of biological role, specifically methylates position 2 of adenine 2503 in 23S rRNA and position 2 of adenine 37 in tRNAs. This Microcystis aeruginosa (strain NIES-843 / IAM M-2473) protein is Probable dual-specificity RNA methyltransferase RlmN.